Consider the following 277-residue polypeptide: Bifunctional protein FolD (277 aa).

NADP(+)-binding positions include 164–166, Ser-189, and Val-230; that span reads GRS.

It belongs to the tetrahydrofolate dehydrogenase/cyclohydrolase family. In terms of assembly, homodimer.

The enzyme catalyses (6R)-5,10-methylene-5,6,7,8-tetrahydrofolate + NADP(+) = (6R)-5,10-methenyltetrahydrofolate + NADPH. The catalysed reaction is (6R)-5,10-methenyltetrahydrofolate + H2O = (6R)-10-formyltetrahydrofolate + H(+). It participates in one-carbon metabolism; tetrahydrofolate interconversion. Its function is as follows. Catalyzes the oxidation of 5,10-methylenetetrahydrofolate to 5,10-methenyltetrahydrofolate and then the hydrolysis of 5,10-methenyltetrahydrofolate to 10-formyltetrahydrofolate. In Exiguobacterium sibiricum (strain DSM 17290 / CCUG 55495 / CIP 109462 / JCM 13490 / 255-15), this protein is Bifunctional protein FolD.